The primary structure comprises 192 residues: Pyridoxal 5'-phosphate synthase subunit PdxT (192 aa).

Residue 47–49 (GES) coordinates L-glutamine. Catalysis depends on cysteine 79, which acts as the Nucleophile. L-glutamine is bound by residues arginine 106 and 134–135 (IR). Active-site charge relay system residues include histidine 170 and glutamate 172.

The protein belongs to the glutaminase PdxT/SNO family. In terms of assembly, in the presence of PdxS, forms a dodecamer of heterodimers. Only shows activity in the heterodimer.

It carries out the reaction aldehydo-D-ribose 5-phosphate + D-glyceraldehyde 3-phosphate + L-glutamine = pyridoxal 5'-phosphate + L-glutamate + phosphate + 3 H2O + H(+). The enzyme catalyses L-glutamine + H2O = L-glutamate + NH4(+). The protein operates within cofactor biosynthesis; pyridoxal 5'-phosphate biosynthesis. Its function is as follows. Catalyzes the hydrolysis of glutamine to glutamate and ammonia as part of the biosynthesis of pyridoxal 5'-phosphate. The resulting ammonia molecule is channeled to the active site of PdxS. In Geobacillus sp. (strain WCH70), this protein is Pyridoxal 5'-phosphate synthase subunit PdxT.